An 800-amino-acid chain; its full sequence is General transcription and DNA repair factor IIH helicase/translocase subunit XPB (800 aa).

The disordered stretch occupies residues 1-27 (MSSGDSNLKRRRGGNTGQSSKSYNTWT). Residues 17 to 27 (GQSSKSYNTWT) show a composition bias toward polar residues. The 163-residue stretch at 329–491 (MFGNGRARSG…DLNFLIGPKL (163 aa)) folds into the Helicase ATP-binding domain. 342-349 (LPCGAGKS) is a binding site for ATP. The DEVH box signature appears at 444–447 (DEVH). Positions 546-704 (RACEYLIRFH…ELPGIDQEVN (159 aa)) constitute a Helicase C-terminal domain. Residues 743–769 (GAKKSKSSAPTVSRTTGGSTRALSGGN) form a disordered region. Positions 749–764 (SSAPTVSRTTGGSTRA) are enriched in polar residues.

Belongs to the helicase family. RAD25/XPB subfamily. In terms of assembly, component of the 7-subunit TFIIH core complex composed of XPB/repB, XPD/repD, gtf2h1, gtf2h2, gtf2h3, gtf2h4 and gtf2h5, which is active in NER. The core complex associates with the 3-subunit CDK-activating kinase (CAK) module composed of cycH/cyclin H, cdk7 and mnat1 to form the 10-subunit holoenzyme (holo-TFIIH) active in transcription.

The protein resides in the nucleus. It carries out the reaction Couples ATP hydrolysis with the unwinding of duplex DNA by translocating in the 3'-5' direction.. The catalysed reaction is ATP + H2O = ADP + phosphate + H(+). Functionally, ATP-dependent 3'-5' DNA helicase/translocase; binds dsDNA rather than ssDNA, unzipping it in a translocase rather than classical helicase activity. Component of the general transcription and DNA repair factor IIH (TFIIH) core complex. When complexed to CDK-activating kinase (CAK), involved in RNA transcription by RNA polymerase II. The ATPase activity of XPB/ERCC3, but not its helicase activity, is required for DNA opening; it may wrap around the damaged DNA wedging it open, causing localized melting and twisting that allows XPD/ERCC2 helicase to anchor. The ATP-dependent helicase activity of XPB/ERCC3 may be required for promoter escape. Also involved in transcription-coupled nucleotide excision repair (NER) of damaged DNA. In NER, TFIIH acts by opening DNA around the lesion to allow the excision of the damaged oligonucleotide and its replacement by a new DNA fragment. The structure of the TFIIH transcription complex differs from the NER-TFIIH complex. In Dictyostelium discoideum (Social amoeba), this protein is General transcription and DNA repair factor IIH helicase/translocase subunit XPB.